Here is a 491-residue protein sequence, read N- to C-terminus: Dipeptide and tripeptide permease B (491 aa).

At 1 to 26 (MNNTAPGLLHQPKPFFMIFFVELWER) the chain is on the cytoplasmic side. Residues 27 to 47 (FGYYGVQGILAVFFVKQLGFS) traverse the membrane as a helical segment. At 48–51 (QEQA) the chain is on the periplasmic side. Residues 52–72 (FITFGAFAALVYGLISIGGYV) traverse the membrane as a helical segment. The Cytoplasmic segment spans residues 73–81 (GDHLLGTKR). A helical membrane pass occupies residues 82–102 (TMVLGAIVLALGYFMTGMSLL). Topologically, residues 103-105 (KPE) are periplasmic. The helical transmembrane segment at 106–126 (MIFIALGTIAVGNGLFKANPA) threads the bilayer. At 127 to 145 (SLLSKCYPPKDPRLDGAFT) the chain is on the cytoplasmic side. A helical transmembrane segment spans residues 146 to 166 (LFYMSINIGSLLSLSLAPIIA). Residues 167–171 (ERFGY) lie on the Periplasmic side of the membrane. Residues 172–192 (AVTYNLCGLGLIIALLVYFAC) traverse the membrane as a helical segment. Residues 193 to 210 (RGMVRSIGSAPDHQPLNY) lie on the Cytoplasmic side of the membrane. The helical transmembrane segment at 211 to 231 (GKLLLVLAGAVVMIFLCAWLM) threads the bilayer. Residue His232 is a topological domain, periplasmic. A helical membrane pass occupies residues 233–253 (NVGVANIVLIAVSAVVLYFFF). Residues 254–266 (REAFKQDKTGRNR) are Cytoplasmic-facing. A helical transmembrane segment spans residues 267-287 (MFVAFILMIEAVLFYILYAQM). Topologically, residues 288–312 (PTSLNFFAINNVRHELLGFAINPVS) are periplasmic. The chain crosses the membrane as a helical span at residues 313 to 335 (FQALNPFWVVVASPILASIYTRL). Over 336–349 (GSRGRDMTMPTKFT) the chain is Cytoplasmic. The helical transmembrane segment at 350–370 (LGMLLCSLGFLTAAAAGMWFA) threads the bilayer. Over 371–378 (DAQGLTSP) the chain is Periplasmic. A helical transmembrane segment spans residues 379-399 (WFVVLVYLFQSLGELMISALG). Residues 400-423 (LAMVAALVPQYLMGFILGMWFLTQ) are Cytoplasmic-facing. The helical transmembrane segment at 424 to 444 (AAAFLLGGYVATFTAVPAGIH) threads the bilayer. At 445–454 (DPLQTLPIYT) the chain is on the periplasmic side. The chain crosses the membrane as a helical span at residues 455-475 (GVFGKIGIATLIVTLVMAAMV). The Cytoplasmic portion of the chain corresponds to 476-491 (PWLNRMMNTPADGQKA).

The protein belongs to the major facilitator superfamily. Proton-dependent oligopeptide transporter (POT/PTR) (TC 2.A.17) family. DtpB subfamily.

It localises to the cell inner membrane. Its function is as follows. Proton-dependent permease that transports di- and tripeptides. This Edwardsiella piscicida protein is Dipeptide and tripeptide permease B.